A 64-amino-acid chain; its full sequence is DNA-binding protein 7a (64 aa).

An N6-methyllysine; partial mark is found at lysine 5 and lysine 7.

It belongs to the 7 kDa DNA-binding/endoribonuclease P2 family. In terms of assembly, homodimer. Post-translationally, lys-5 and Lys-7 were found to be 60% monomethylated. ADP-ribosylated by endogenous proteins in vitro.

In terms of biological role, can constrain negative DNA supercoils. May be involved in maintaining the integrity of the genome at high temperature. Has RNA endonuclease activity with a narrow substrate specificity; the cleavage products are 3'-phosphooligonucleotides. The protein is DNA-binding protein 7a (sso7a1) of Saccharolobus solfataricus (strain ATCC 35092 / DSM 1617 / JCM 11322 / P2) (Sulfolobus solfataricus).